An 805-amino-acid chain; its full sequence is U-box domain-containing protein 32 (805 aa).

Disordered stretches follow at residues 181 to 205 (SNNR…SEKL) and 226 to 284 (EKDT…EREG). Basic and acidic residues predominate over residues 226–239 (EKDTGQLEREKVEP). Over residues 245 to 257 (FSSGSSSSFGEPV) the composition is skewed to low complexity. Positions 331–434 (LEGLCIKESS…EVNALRRLVK (104 aa)) form a coiled coil. The Protein kinase domain occupies 460–718 (FDPSWKLGEG…FIDRMKAPEV (259 aa)). ATP-binding positions include 466–474 (LGEGKYGSV) and lysine 487. One can recognise a U-box domain in the interval 734–805 (RPPSHYLCPI…LAIQDWQNQW (72 aa)).

It belongs to the protein kinase superfamily. Ser/Thr protein kinase family.

The catalysed reaction is S-ubiquitinyl-[E2 ubiquitin-conjugating enzyme]-L-cysteine + [acceptor protein]-L-lysine = [E2 ubiquitin-conjugating enzyme]-L-cysteine + N(6)-ubiquitinyl-[acceptor protein]-L-lysine.. The protein operates within protein modification; protein ubiquitination. Functionally, functions as an E3 ubiquitin ligase. This chain is U-box domain-containing protein 32 (PUB32), found in Arabidopsis thaliana (Mouse-ear cress).